The sequence spans 502 residues: Cyanidin 3-O-glucoside 5-O-glucosyltransferase (acyl-glucose) (502 aa).

A signal peptide spans 1-30 (MNMSCKFEIVLLVSWWLLLVLVFGVESSMF). N2 carries N-linked (GlcNAc...) asparagine glycosylation. A beta-D-glucoside contacts are provided by residues Q52, H150, and 196–197 (NE). The active-site Proton donor is E197. A glycan (N-linked (GlcNAc...) asparagine) is linked at N303. A beta-D-glucoside is bound by residues Y320 and E388. Residue E388 is the Nucleophile of the active site. Residue N425 is glycosylated (N-linked (GlcNAc...) asparagine). A beta-D-glucoside contacts are provided by W435 and F451.

It belongs to the glycosyl hydrolase 1 family. In terms of tissue distribution, expressed in petals.

Its subcellular location is the vacuole. The enzyme catalyses cyanidin 3-O-beta-D-glucoside + 1-O-(trans-sinapoyl)-beta-D-glucose = cyanidin 3,5-di-O-beta-D-glucoside + (E)-sinapate. It functions in the pathway pigment biosynthesis; anthocyanin biosynthesis. Its function is as follows. Beta-glycosidase that catalyzes the transfer of glucose moiety to anthocyanidin 3-glucoside at the 5 position. Anthocyanins are ubiquitous colored pigments that are responsible for variations in petal color. Uses acyl-glucoses, but not UDP-glucose, as the glucose donor. The polypeptide is Cyanidin 3-O-glucoside 5-O-glucosyltransferase (acyl-glucose) (AA5GT) (Dianthus caryophyllus (Carnation)).